The sequence spans 24 residues: Waglerin-4 (24 aa).

Cysteines 11 and 15 form a disulfide.

This sequence belongs to the waglerin family. Monomer. Expressed by the venom gland.

The protein resides in the secreted. In terms of biological role, waglerin-2 selectively blocks the epsilon subunit of muscle nicotinic acetylcholine receptor (nAChR). Also has effects on rodent ionotropic GABA(A) receptors (GABR), since it potentiates I(GABA) in some neurons and depresses I(GABA) in others. In mice, it elicits tachypnea, ocular proptosis, rapid collapse and spasms, whereas no toxic effects on respiration and blood pressure are observed in rats. Functionally, waglerin-4 selectively blocks the epsilon subunit of muscle nicotinic acetylcholine receptor. It elicits tachypnea, ocular proptosis, rapid collapse and spasms in mice. It causes death by respiratory failure. The protein is Waglerin-4 of Tropidolaemus wagleri (Wagler's pit viper).